The primary structure comprises 387 residues: Phosphoglycerate kinase (387 aa).

Residues 21 to 23 (DLN), R36, and 59 to 62 (HLGR) each bind substrate. K84 is subject to N6-acetyllysine. The substrate site is built by R113 and R146. ATP is bound by residues K197, E314, and 340-343 (GGDT).

The protein belongs to the phosphoglycerate kinase family. As to quaternary structure, monomer.

Its subcellular location is the cytoplasm. It carries out the reaction (2R)-3-phosphoglycerate + ATP = (2R)-3-phospho-glyceroyl phosphate + ADP. It participates in carbohydrate degradation; glycolysis; pyruvate from D-glyceraldehyde 3-phosphate: step 2/5. This chain is Phosphoglycerate kinase, found in Escherichia coli O9:H4 (strain HS).